Here is a 396-residue protein sequence, read N- to C-terminus: tRNA (guanine-N(7)-)-methyltransferase (396 aa).

The S-adenosyl-L-methionine site is built by Glu-125, Glu-150, and Asp-177. Lys-203 and Asp-233 together coordinate substrate.

It belongs to the class I-like SAM-binding methyltransferase superfamily. TrmB family.

The enzyme catalyses guanosine(46) in tRNA + S-adenosyl-L-methionine = N(7)-methylguanosine(46) in tRNA + S-adenosyl-L-homocysteine. It functions in the pathway tRNA modification; N(7)-methylguanine-tRNA biosynthesis. In terms of biological role, catalyzes the formation of N(7)-methylguanine at position 46 (m7G46) in tRNA. This Helicobacter hepaticus (strain ATCC 51449 / 3B1) protein is tRNA (guanine-N(7)-)-methyltransferase.